The sequence spans 366 residues: DNA replication and repair protein RecF (366 aa).

30-37 (GRNAQGKT) provides a ligand contact to ATP.

This sequence belongs to the RecF family.

It localises to the cytoplasm. The RecF protein is involved in DNA metabolism; it is required for DNA replication and normal SOS inducibility. RecF binds preferentially to single-stranded, linear DNA. It also seems to bind ATP. The polypeptide is DNA replication and repair protein RecF (Streptococcus thermophilus (strain ATCC BAA-250 / LMG 18311)).